The following is a 391-amino-acid chain: Phosphoglycerate kinase (391 aa).

Substrate is bound by residues D21–N23, R36, H59–R62, R113, and R146. Residues K197, E319, and G345 to T348 contribute to the ATP site.

This sequence belongs to the phosphoglycerate kinase family. As to quaternary structure, monomer.

Its subcellular location is the cytoplasm. The enzyme catalyses (2R)-3-phosphoglycerate + ATP = (2R)-3-phospho-glyceroyl phosphate + ADP. The protein operates within carbohydrate degradation; glycolysis; pyruvate from D-glyceraldehyde 3-phosphate: step 2/5. This Shewanella denitrificans (strain OS217 / ATCC BAA-1090 / DSM 15013) protein is Phosphoglycerate kinase.